We begin with the raw amino-acid sequence, 461 residues long: MNLQIIILAAGQGKRMYSDTPKVLHHLAGKPLLTHVVETAQQLNPDAIHVIYGHGGEQIKSSLPNLPVHWVHQAEQLGTGHAVLQAMPHIPDDAYVLVLSADVPLIQVGTLQSLIECSQRQNPDHSVLALLVAELENPSGLGRIIRNNQGEIYSIVEEKDANEQVKNIKEIYSGVCCTLANNLKKWLPQLSNSNAQGEYYLTEIISLAVQNKTPITSLTAKNSFEVQGINNRQQLQQLERTWQQRAANQLMEKGATLADANRFDLRGELYCGKDVYIDINCIFTGKVVLGNGCKIGPNCSLTNVTLGDGCEVYANSVLEGCHIANDCHIGPFARLRSGTQLASHCKIGNFVETKKAIFDEGTKASHLSYLGDVLLGKNVNVGAGTITCNYDGVNKHQTIIEDGVFIGSDTQLVAPVTVGANATIGAGSTIRRNVPPDELTLTESRQKTIYGWKRPVKRERD.

Positions 1 to 232 (MNLQIIILAA…SFEVQGINNR (232 aa)) are pyrophosphorylase. UDP-N-acetyl-alpha-D-glucosamine-binding positions include 8–11 (LAAG), Lys-22, Gln-73, and 78–79 (GT). Asp-102 serves as a coordination point for Mg(2+). UDP-N-acetyl-alpha-D-glucosamine is bound by residues Gly-142, Glu-157, and Asn-230. Asn-230 contributes to the Mg(2+) binding site. A linker region spans residues 233–253 (QQLQQLERTWQQRAANQLMEK). Residues 254-461 (GATLADANRF…WKRPVKRERD (208 aa)) form an N-acetyltransferase region. UDP-N-acetyl-alpha-D-glucosamine contacts are provided by Arg-336 and Lys-354. His-366 functions as the Proton acceptor in the catalytic mechanism. UDP-N-acetyl-alpha-D-glucosamine contacts are provided by Tyr-369 and Asn-380. Acetyl-CoA is bound by residues Ala-383, 389–390 (NY), Ser-408, and Ala-426.

It in the N-terminal section; belongs to the N-acetylglucosamine-1-phosphate uridyltransferase family. The protein in the C-terminal section; belongs to the transferase hexapeptide repeat family. Homotrimer. Requires Mg(2+) as cofactor.

The protein localises to the cytoplasm. It carries out the reaction alpha-D-glucosamine 1-phosphate + acetyl-CoA = N-acetyl-alpha-D-glucosamine 1-phosphate + CoA + H(+). The catalysed reaction is N-acetyl-alpha-D-glucosamine 1-phosphate + UTP + H(+) = UDP-N-acetyl-alpha-D-glucosamine + diphosphate. The protein operates within nucleotide-sugar biosynthesis; UDP-N-acetyl-alpha-D-glucosamine biosynthesis; N-acetyl-alpha-D-glucosamine 1-phosphate from alpha-D-glucosamine 6-phosphate (route II): step 2/2. It participates in nucleotide-sugar biosynthesis; UDP-N-acetyl-alpha-D-glucosamine biosynthesis; UDP-N-acetyl-alpha-D-glucosamine from N-acetyl-alpha-D-glucosamine 1-phosphate: step 1/1. Its pathway is bacterial outer membrane biogenesis; LPS lipid A biosynthesis. Functionally, catalyzes the last two sequential reactions in the de novo biosynthetic pathway for UDP-N-acetylglucosamine (UDP-GlcNAc). The C-terminal domain catalyzes the transfer of acetyl group from acetyl coenzyme A to glucosamine-1-phosphate (GlcN-1-P) to produce N-acetylglucosamine-1-phosphate (GlcNAc-1-P), which is converted into UDP-GlcNAc by the transfer of uridine 5-monophosphate (from uridine 5-triphosphate), a reaction catalyzed by the N-terminal domain. The sequence is that of Bifunctional protein GlmU from Legionella pneumophila (strain Paris).